A 452-amino-acid polypeptide reads, in one-letter code: Asparagine--tRNA ligase (452 aa).

Belongs to the class-II aminoacyl-tRNA synthetase family. Homodimer.

The protein localises to the cytoplasm. The enzyme catalyses tRNA(Asn) + L-asparagine + ATP = L-asparaginyl-tRNA(Asn) + AMP + diphosphate + H(+). The protein is Asparagine--tRNA ligase of Mycoplasma mycoides subsp. mycoides SC (strain CCUG 32753 / NCTC 10114 / PG1).